Consider the following 915-residue polypeptide: Copper-exporting P-type ATPase (915 aa).

2 consecutive HMA domains span residues 11-72 (NHFA…YQGG) and 73-134 (TEQT…YQAI). Positions 22, 25, 84, and 87 each coordinate Cu(+). A disordered region spans residues 142–169 (FAPAASIDEKETDTPDAENSSNTEATEA). Positions 158 to 169 (AENSSNTEATEA) are enriched in polar residues. Residues 172–236 (QTLSLLIKGM…AIQSSGYQAE (65 aa)) enclose the HMA 3 domain. Cu(+) contacts are provided by Cys-183 and Cys-186. 7 helical membrane passes run 265–285 (LGIA…NMMI), 293–313 (VWGG…RHFF), 329–349 (TLVA…VAWP), 359–379 (VYFE…YIET), 474–494 (LVIT…IQMV), 514–534 (VFVP…YLYG), and 541–561 (YMLV…LGLA). The active-site 4-aspartylphosphate intermediate is Asp-598. Mg(2+) is bound by residues Asp-796 and Asp-800. The next 2 helical transmembrane spans lie at 801–821 (APAL…DVAI) and 865–885 (IPIA…PVVA).

Belongs to the cation transport ATPase (P-type) (TC 3.A.3) family. Type IB subfamily.

It localises to the cell membrane. It carries out the reaction Cu(+)(in) + ATP + H2O = Cu(+)(out) + ADP + phosphate + H(+). Functionally, involved in copper export. This is Copper-exporting P-type ATPase (copA) from Vibrio cholerae serotype O1 (strain ATCC 39315 / El Tor Inaba N16961).